The primary structure comprises 364 residues: Cobalt-precorrin-5B C(1)-methyltransferase (364 aa).

The protein belongs to the CbiD family.

The catalysed reaction is Co-precorrin-5B + S-adenosyl-L-methionine = Co-precorrin-6A + S-adenosyl-L-homocysteine. The protein operates within cofactor biosynthesis; adenosylcobalamin biosynthesis; cob(II)yrinate a,c-diamide from sirohydrochlorin (anaerobic route): step 6/10. Its function is as follows. Catalyzes the methylation of C-1 in cobalt-precorrin-5B to form cobalt-precorrin-6A. This is Cobalt-precorrin-5B C(1)-methyltransferase from Pseudomonas putida (strain ATCC 700007 / DSM 6899 / JCM 31910 / BCRC 17059 / LMG 24140 / F1).